A 435-amino-acid chain; its full sequence is ATP-dependent protease ATPase subunit HslU (435 aa).

ATP is bound by residues isoleucine 18, 60–65, aspartate 248, glutamate 313, and arginine 385; that span reads GVGKTE.

The protein belongs to the ClpX chaperone family. HslU subfamily. A double ring-shaped homohexamer of HslV is capped on each side by a ring-shaped HslU homohexamer. The assembly of the HslU/HslV complex is dependent on binding of ATP.

Its subcellular location is the cytoplasm. ATPase subunit of a proteasome-like degradation complex; this subunit has chaperone activity. The binding of ATP and its subsequent hydrolysis by HslU are essential for unfolding of protein substrates subsequently hydrolyzed by HslV. HslU recognizes the N-terminal part of its protein substrates and unfolds these before they are guided to HslV for hydrolysis. This is ATP-dependent protease ATPase subunit HslU from Sinorhizobium medicae (strain WSM419) (Ensifer medicae).